The following is a 256-amino-acid chain: Type III pantothenate kinase (256 aa).

Residue 6-13 (DVGNSHIY) participates in ATP binding. Substrate is bound by residues Tyr99 and 106–109 (GADR). Asp108 functions as the Proton acceptor in the catalytic mechanism. Position 129 (Asp129) interacts with K(+). Thr132 provides a ligand contact to ATP. Thr184 contributes to the substrate binding site.

It belongs to the type III pantothenate kinase family. In terms of assembly, homodimer. The cofactor is NH4(+). K(+) serves as cofactor.

It localises to the cytoplasm. The catalysed reaction is (R)-pantothenate + ATP = (R)-4'-phosphopantothenate + ADP + H(+). It participates in cofactor biosynthesis; coenzyme A biosynthesis; CoA from (R)-pantothenate: step 1/5. Functionally, catalyzes the phosphorylation of pantothenate (Pan), the first step in CoA biosynthesis. This is Type III pantothenate kinase from Legionella pneumophila (strain Corby).